Consider the following 319-residue polypeptide: HTH-type transcriptional regulator YidZ (319 aa).

Residues 8-65 (LDLNLLLCLQLLMQERSVTKAAKRMNVTPSAVSKSLAKLRAWFDDPLFVNSPLGLSPT) enclose the HTH lysR-type domain. Positions 25-44 (VTKAAKRMNVTPSAVSKSLA) form a DNA-binding region, H-T-H motif.

Belongs to the LysR transcriptional regulatory family.

In terms of biological role, involved in anaerobic NO protection. The sequence is that of HTH-type transcriptional regulator YidZ from Escherichia coli O17:K52:H18 (strain UMN026 / ExPEC).